A 75-amino-acid chain; its full sequence is Tetrahydromethanopterin S-methyltransferase subunit F (75 aa).

The chain crosses the membrane as a helical span at residues 53 to 73; sequence FAGLACGMVFAGVLLVPLLLL.

This sequence belongs to the MtrF family. As to quaternary structure, the complex is composed of 8 subunits; MtrA, MtrB, MtrC, MtrD, MtrE, MtrF, MtrG and MtrH.

The protein localises to the cell membrane. It carries out the reaction 5-methyl-5,6,7,8-tetrahydromethanopterin + coenzyme M + 2 Na(+)(in) = 5,6,7,8-tetrahydromethanopterin + methyl-coenzyme M + 2 Na(+)(out). It participates in one-carbon metabolism; methanogenesis from CO(2); methyl-coenzyme M from 5,10-methylene-5,6,7,8-tetrahydromethanopterin: step 2/2. Its function is as follows. Part of a complex that catalyzes the formation of methyl-coenzyme M and tetrahydromethanopterin from coenzyme M and methyl-tetrahydromethanopterin. This is an energy-conserving, sodium-ion translocating step. This is Tetrahydromethanopterin S-methyltransferase subunit F from Methanopyrus kandleri (strain AV19 / DSM 6324 / JCM 9639 / NBRC 100938).